The chain runs to 215 residues: 3-isopropylmalate dehydratase small subunit (215 aa).

Belongs to the LeuD family. LeuD type 1 subfamily. In terms of assembly, heterodimer of LeuC and LeuD.

The catalysed reaction is (2R,3S)-3-isopropylmalate = (2S)-2-isopropylmalate. Its pathway is amino-acid biosynthesis; L-leucine biosynthesis; L-leucine from 3-methyl-2-oxobutanoate: step 2/4. Catalyzes the isomerization between 2-isopropylmalate and 3-isopropylmalate, via the formation of 2-isopropylmaleate. The sequence is that of 3-isopropylmalate dehydratase small subunit from Xanthomonas oryzae pv. oryzae (strain MAFF 311018).